The primary structure comprises 479 residues: Aspartyl/glutamyl-tRNA(Asn/Gln) amidotransferase subunit B (479 aa).

This sequence belongs to the GatB/GatE family. GatB subfamily. Heterotrimer of A, B and C subunits.

The enzyme catalyses L-glutamyl-tRNA(Gln) + L-glutamine + ATP + H2O = L-glutaminyl-tRNA(Gln) + L-glutamate + ADP + phosphate + H(+). It catalyses the reaction L-aspartyl-tRNA(Asn) + L-glutamine + ATP + H2O = L-asparaginyl-tRNA(Asn) + L-glutamate + ADP + phosphate + 2 H(+). In terms of biological role, allows the formation of correctly charged Asn-tRNA(Asn) or Gln-tRNA(Gln) through the transamidation of misacylated Asp-tRNA(Asn) or Glu-tRNA(Gln) in organisms which lack either or both of asparaginyl-tRNA or glutaminyl-tRNA synthetases. The reaction takes place in the presence of glutamine and ATP through an activated phospho-Asp-tRNA(Asn) or phospho-Glu-tRNA(Gln). In Streptococcus suis (strain 98HAH33), this protein is Aspartyl/glutamyl-tRNA(Asn/Gln) amidotransferase subunit B.